A 448-amino-acid polypeptide reads, in one-letter code: GTPase Der (448 aa).

EngA-type G domains are found at residues 3-167 and 182-355; these read PVIA…EPPE and TRLA…ASAT. GTP contacts are provided by residues 9–16, 56–60, 119–122, 188–195, 235–239, and 300–303; these read GRPNVGKS, DTGGF, NKAE, DTAGL, and NKWD. The KH-like domain maps to 356 to 440; the sequence is RKLPTPQLTR…PMRIELRASH (85 aa).

This sequence belongs to the TRAFAC class TrmE-Era-EngA-EngB-Septin-like GTPase superfamily. EngA (Der) GTPase family. As to quaternary structure, associates with the 50S ribosomal subunit.

GTPase that plays an essential role in the late steps of ribosome biogenesis. The protein is GTPase Der of Leptothrix cholodnii (strain ATCC 51168 / LMG 8142 / SP-6) (Leptothrix discophora (strain SP-6)).